Here is a 718-residue protein sequence, read N- to C-terminus: LON peptidase N-terminal domain and RING finger protein 3 (718 aa).

The disordered stretch occupies residues 1 to 69 (MESLRTEQML…PGTSTPESKV (69 aa)). The span at 57–66 (EQSPGTSTPE) shows a compositional bias: polar residues. Residues 67–100 (SKVLLTQADALASRGRIREALEVYRQLSERQQLV) form a TPR 1 repeat. The RING-type 1 zinc finger occupies 158–196 (CRKCHGFLSDPVSLSCGHTFCKLCLERGRAADRRCALCG). TPR repeat units follow at residues 243–276 (ASQL…APND) and 278–310 (LLYS…RPMG). Residues 322-413 (SQEEAAARGD…TDQGDKPALS (92 aa)) are disordered. A compositionally biased stretch (basic and acidic residues) spans 339–352 (AKVKGDGQQHHMKD). The segment at 426–464 (CALCMRLFYEPVTTPCGHTFCLKCLERCLDHNAKCPLCK) adopts an RING-type 2 zinc-finger fold. The region spanning 505–714 (MEELSNLNKN…GIRRVLAFIS (210 aa)) is the Lon N-terminal domain.

This chain is LON peptidase N-terminal domain and RING finger protein 3 (LONRF3), found in Macaca fascicularis (Crab-eating macaque).